The sequence spans 1167 residues: Outer membrane protein SlpA (1167 aa).

Residues 1-22 (MKKSLIALTTALSFGLAAAQTA) form the signal peptide. At 23 to 254 (APVSAPQVPA…RIAALERNAF (232 aa)) the chain is on the periplasmic side. One can recognise an SLH domain in the interval 29–92 (QVPALTDVPA…DQMRDGETPA (64 aa)). The beta stranded transmembrane segment at 255-268 (SVKPSLTIGYSVSR) threads the bilayer. Over 269–377 (TSRNFDVDRL…RNGFGFNNLA (109 aa)) the chain is Extracellular. Cu(2+) contacts are provided by aspartate 274, aspartate 276, arginine 305, phenylalanine 308, aspartate 310, and glutamate 381. A beta stranded transmembrane segment spans residues 378-403 (RYKEGSTDIGISLGFDTSGQFSQVTS). Over 404 to 416 (GTGGSLFSTAGRL) the chain is Periplasmic. A beta stranded transmembrane segment spans residues 417–428 (QVNQIDLNFGLV). Over 429–471 (TGLPSDAYVDTNGNGKKDDGEATGRGTYLGSGGTAAILRDPAG) the chain is Extracellular. Positions 438, 442, 444, 446, and 449 each coordinate Fe(3+). Residues 472 to 490 (NVYRPVFFRFKNATTQFSV) form a beta stranded membrane-spanning segment. Residues 491–494 (GNNP) lie on the Periplasmic side of the membrane. The chain crosses the membrane as a beta stranded span at residues 495-500 (VIVTLG). At 501–519 (QQQKFYFSDYVFDNNYDGR) the chain is on the extracellular side. Cu(2+)-binding residues include aspartate 513 and asparagine 515. A beta stranded transmembrane segment spans residues 520–528 (GDGFTVTVD). The Periplasmic portion of the chain corresponds to 529–540 (GSNVPVIGAWKP). The chain crosses the membrane as a beta stranded span at residues 541–549 (QIKGVYGSR). The Cu(2+) site is built by arginine 549, glycine 551, aspartate 553, and glycine 559. The Extracellular segment spans residues 550–561 (SGLDGTAEAGYG). Residues 562–571 (VYYRGVRAQI) traverse the membrane as a beta stranded segment. At 572 to 577 (TPVGTL) the chain is on the periplasmic side. Residues 578-588 (TAGIHYAQEGR) form a beta stranded membrane-spanning segment. Topologically, residues 589 to 601 (DMFGAAQNTTSTP) are extracellular. A beta stranded membrane pass occupies residues 602–615 (SDVTTYGADLHGKA). At 616 to 617 (FG) the chain is on the periplasmic side. The chain crosses the membrane as a beta stranded span at residues 618–630 (VELHSEYATSRVR). Serine 622 provides a ligand contact to deinoxanthin. Residues 631–638 (PNTANAAV) lie on the Extracellular side of the membrane. Residues 639–649 (QTSNAFYARVA) traverse the membrane as a beta stranded segment. Over 650 to 670 (TRKDNLAFDLNTPAAKFGNDT) the chain is Periplasmic. The beta stranded transmembrane segment at 671 to 682 (FGVSLYDLNYRK) threads the bilayer. Over 683-753 (IDAGYNNVAG…GTVVATNTKI (71 aa)) the chain is Extracellular. Glycine 716 lines the Cu(2+) pocket. The beta stranded transmembrane segment at 754–766 (GQMGFGVKAAANL) threads the bilayer. At 767–768 (GP) the chain is on the periplasmic side. The chain crosses the membrane as a beta stranded span at residues 769-779 (VAIGGYYDTST). At 780–788 (GANGDNANR) the chain is on the extracellular side. The chain crosses the membrane as a beta stranded span at residues 789-798 (MTEAGGSAKV). The Periplasmic segment spans residues 799-802 (AYSI). A beta stranded transmembrane segment spans residues 803-814 (FSLRGTYNTLDS). The Extracellular portion of the chain corresponds to 815–831 (NRPQIYRDAAGTQIIGD). A beta stranded transmembrane segment spans residues 832-843 (AKVRRYAVQADV). Topologically, residues 844–848 (TPGLG) are periplasmic. Residues 849–860 (LFVGAYYRDVNV) traverse the membrane as a beta stranded segment. The Extracellular portion of the chain corresponds to 861-931 (NGVRSTTDRG…DQSRTATCFT (71 aa)). The chain crosses the membrane as a beta stranded span at residues 932–940 (SYGVEAGHA). The Periplasmic segment spans residues 941 to 949 (GDNANALVK). A beta stranded membrane pass occupies residues 950-960 (DLFFRVGYSRV). The Extracellular portion of the chain corresponds to 961 to 976 (YVPTTATATTGDFSGS). The chain crosses the membrane as a beta stranded span at residues 977–988 (VTYGDARYDRKV). Residues 989–990 (GV) lie on the Periplasmic side of the membrane. The beta stranded transmembrane segment at 991–1002 (ANVRLAGSFSTT) threads the bilayer. The Extracellular segment spans residues 1003 to 1014 (NTQLDSRPAGTR). Residues 1015–1023 (GAVGLIVRT) form a beta stranded membrane-spanning segment. Over 1024–1032 (DPLENVPFR) the chain is Periplasmic. Residues 1033–1046 (PQFNGQVGYYTADN) traverse the membrane as a beta stranded segment. The Extracellular portion of the chain corresponds to 1047 to 1052 (RVAAGN). Residues 1053-1066 (YNANATKYGAGVVL) traverse the membrane as a beta stranded segment. Residues 1067-1073 (NDFLLPQ) lie on the Periplasmic side of the membrane. The beta stranded transmembrane segment at 1074–1086 (TKIGVRYDGYMAQ) threads the bilayer. The Extracellular portion of the chain corresponds to 1087–1108 (NRQYTPFDGDGTQGYFSDANNN). Residues 1109 to 1122 (RRTNLNGVYVEGAY) form a beta stranded membrane-spanning segment. Topologically, residues 1123 to 1124 (QD) are periplasmic. Residues 1125-1138 (LIFSYGTYTLSQKD) form a beta stranded membrane-spanning segment. Topologically, residues 1139 to 1153 (LNGVEYGSGINNGQP) are extracellular. Residues 1154-1166 (ARGQTFKISYKVN) form a beta stranded membrane-spanning segment. Residue phenylalanine 1167 is a topological domain, periplasmic.

In terms of assembly, homotrimer. Part of a heterooligomeric complex resulting in the main assembly named S-layer deinoxanthin-binding complex (SDBC) which is composed of six different subunits, namely SlpA, DR_2310, DR_0505, DR_A0283, DR_A0282, and DR_A0281.

It localises to the cell envelope. The protein resides in the cell outer membrane. It catalyses the reaction L-arginine(in) = L-arginine(out). The enzyme catalyses L-lysine(in) = L-lysine(out). The catalysed reaction is L-glutamate(out) = L-glutamate(in). Plays an important role in the structural organization and integrity of the cell envelope, bridging the outer membrane to the peptidoglyan layer. Is a highly abundant molecule in the D.radiodurans cell envelope but is not a fundamental component of the S-layer. Binds the carotenoid deinoxanthin, a strong protective antioxidant specific of this bacterium, and could be part of the first lane of defense against UV radiation, especially under desiccation. Appears to be a nonselective channel. Is able to transport charged amino acids such as Lys, Arg and Glu; the large dimension of the pore points toward the physiological importance of the SDBC complex in assisting and allowing the exchange of substances, including nutrients, with the surrounding environment. The polypeptide is Outer membrane protein SlpA (Deinococcus radiodurans (strain ATCC 13939 / DSM 20539 / JCM 16871 / CCUG 27074 / LMG 4051 / NBRC 15346 / NCIMB 9279 / VKM B-1422 / R1)).